Consider the following 523-residue polypeptide: Mitochondrial distribution and morphology protein 34 (523 aa).

Residues 1–200 (MSFKVNWKSL…LPTLIHQFSL (200 aa)) enclose the SMP-LTD domain. A disordered region spans residues 489–523 (ELSMDRSGKRKQRNYGSATYESENPIVAPPPPYSH).

This sequence belongs to the MDM34 family. As to quaternary structure, component of the ER-mitochondria encounter structure (ERMES) or MDM complex, composed of MMM1, MDM10, MDM12 and MDM34.

Its subcellular location is the mitochondrion outer membrane. Its function is as follows. Component of the ERMES/MDM complex, which serves as a molecular tether to connect the endoplasmic reticulum (ER) and mitochondria. Components of this complex are involved in the control of mitochondrial shape and protein biogenesis, and function in nonvesicular lipid trafficking between the ER and mitochondria. MDM34 is required for the interaction of the ER-resident membrane protein MMM1 and the outer mitochondrial membrane-resident beta-barrel protein MDM10. The chain is Mitochondrial distribution and morphology protein 34 from Scheffersomyces stipitis (strain ATCC 58785 / CBS 6054 / NBRC 10063 / NRRL Y-11545) (Yeast).